Consider the following 146-residue polypeptide: Hemoglobin subunit beta-1 (146 aa).

Residues 2–146 (HWTAEEKSAI…VAHALAHRYH (145 aa)) enclose the Globin domain. The heme b site is built by H63 and H92.

Belongs to the globin family. Heterotetramer of two alpha chains and two beta chains. Red blood cells.

Functionally, involved in oxygen transport from the lung to the various peripheral tissues. The sequence is that of Hemoglobin subunit beta-1 from Drymarchon melanurus erebennus (Texas indigo snake).